The chain runs to 358 residues: Mannonate dehydratase (358 aa).

It belongs to the mannonate dehydratase family. Requires Fe(2+) as cofactor. It depends on Mn(2+) as a cofactor.

The catalysed reaction is D-mannonate = 2-dehydro-3-deoxy-D-gluconate + H2O. The protein operates within carbohydrate metabolism; pentose and glucuronate interconversion. Functionally, catalyzes the dehydration of D-mannonate. This is Mannonate dehydratase from Lactococcus lactis subsp. lactis (strain IL1403) (Streptococcus lactis).